Here is a 556-residue protein sequence, read N- to C-terminus: 2,3-bisphosphoglycerate-independent phosphoglycerate mutase (556 aa).

2 residues coordinate Mn(2+): D25 and S78. S78 acts as the Phosphoserine intermediate in catalysis. Substrate is bound by residues H137, 167 to 168 (RD), R203, R210, 283 to 286 (RADR), and K358. Mn(2+)-binding residues include D427, H431, D468, H469, and H498.

This sequence belongs to the BPG-independent phosphoglycerate mutase family. Monomer. Mn(2+) is required as a cofactor. Found ubiquitously in germinating seed.

It localises to the cytoplasm. The catalysed reaction is (2R)-2-phosphoglycerate = (2R)-3-phosphoglycerate. It functions in the pathway carbohydrate degradation; glycolysis; pyruvate from D-glyceraldehyde 3-phosphate: step 3/5. Its function is as follows. Catalyzes the interconversion of 2-phosphoglycerate and 3-phosphoglycerate. This is 2,3-bisphosphoglycerate-independent phosphoglycerate mutase from Ricinus communis (Castor bean).